A 91-amino-acid polypeptide reads, in one-letter code: Small ribosomal subunit protein uS19 (91 aa).

It belongs to the universal ribosomal protein uS19 family.

Protein S19 forms a complex with S13 that binds strongly to the 16S ribosomal RNA. This is Small ribosomal subunit protein uS19 from Colwellia psychrerythraea (strain 34H / ATCC BAA-681) (Vibrio psychroerythus).